A 146-amino-acid polypeptide reads, in one-letter code: Lipoprotein signal peptidase (146 aa).

Transmembrane regions (helical) follow at residues 6–26, 50–70, and 82–104; these read IFLLVAIGIFIIDQNIKTLFL, MFAFIGPYLKWVQALLIGGIL, and YAFPAGLLIGGALGNLYDRFVHA. Catalysis depends on residues Asp-108 and Asp-125. A helical membrane pass occupies residues 123-143; sequence FADVAIDLAVAWILIMVYFFP.

The protein belongs to the peptidase A8 family.

It localises to the cell inner membrane. It carries out the reaction Release of signal peptides from bacterial membrane prolipoproteins. Hydrolyzes -Xaa-Yaa-Zaa-|-(S,diacylglyceryl)Cys-, in which Xaa is hydrophobic (preferably Leu), and Yaa (Ala or Ser) and Zaa (Gly or Ala) have small, neutral side chains.. It functions in the pathway protein modification; lipoprotein biosynthesis (signal peptide cleavage). In terms of biological role, this protein specifically catalyzes the removal of signal peptides from prolipoproteins. This chain is Lipoprotein signal peptidase, found in Sulfurovum sp. (strain NBC37-1).